Consider the following 190-residue polypeptide: Pyridoxal 5'-phosphate synthase subunit PdxT (190 aa).

46–48 (GES) is a binding site for L-glutamine. Residue C78 is the Nucleophile of the active site. L-glutamine-binding positions include R105 and 134–135 (IR). Residues H170 and E172 each act as charge relay system in the active site.

The protein belongs to the glutaminase PdxT/SNO family. In terms of assembly, in the presence of PdxS, forms a dodecamer of heterodimers. Only shows activity in the heterodimer.

The catalysed reaction is aldehydo-D-ribose 5-phosphate + D-glyceraldehyde 3-phosphate + L-glutamine = pyridoxal 5'-phosphate + L-glutamate + phosphate + 3 H2O + H(+). It carries out the reaction L-glutamine + H2O = L-glutamate + NH4(+). It participates in cofactor biosynthesis; pyridoxal 5'-phosphate biosynthesis. Functionally, catalyzes the hydrolysis of glutamine to glutamate and ammonia as part of the biosynthesis of pyridoxal 5'-phosphate. The resulting ammonia molecule is channeled to the active site of PdxS. The chain is Pyridoxal 5'-phosphate synthase subunit PdxT from Clostridium beijerinckii (strain ATCC 51743 / NCIMB 8052) (Clostridium acetobutylicum).